Here is a 132-residue protein sequence, read N- to C-terminus: MRDFDFSFNHKACEGCGAKCCVGESGYIFVTIQEMQQISAFLKLELEEFSQKYVKKVGYKFSLLEKDAKDLGLACVFLDLETKKCQIYSARPKQCQTFPFWESVKTFSKEQKEAFCQSCPGITQKTKETKVR.

To M.jannaschii MJ0661.

This is an uncharacterized protein from Helicobacter pylori (strain J99 / ATCC 700824) (Campylobacter pylori J99).